The following is a 55-amino-acid chain: Large ribosomal subunit protein bL33 (55 aa).

The protein belongs to the bacterial ribosomal protein bL33 family.

The protein is Large ribosomal subunit protein bL33 of Methylobacterium nodulans (strain LMG 21967 / CNCM I-2342 / ORS 2060).